The primary structure comprises 260 residues: Indole-3-glycerol phosphate synthase (260 aa).

It belongs to the TrpC family.

The enzyme catalyses 1-(2-carboxyphenylamino)-1-deoxy-D-ribulose 5-phosphate + H(+) = (1S,2R)-1-C-(indol-3-yl)glycerol 3-phosphate + CO2 + H2O. The protein operates within amino-acid biosynthesis; L-tryptophan biosynthesis; L-tryptophan from chorismate: step 4/5. The chain is Indole-3-glycerol phosphate synthase from Thermoanaerobacter pseudethanolicus (strain ATCC 33223 / 39E) (Clostridium thermohydrosulfuricum).